A 620-amino-acid chain; its full sequence is Chaperone protein DnaK (620 aa).

Threonine 197 is modified (phosphothreonine; by autocatalysis). The tract at residues 597-620 is disordered; that stretch reads AMANKNNAEQPKKKDDDVIDAEVE.

This sequence belongs to the heat shock protein 70 family.

In terms of biological role, acts as a chaperone. In Helicobacter pylori (strain Shi470), this protein is Chaperone protein DnaK.